We begin with the raw amino-acid sequence, 852 residues long: Glutamine--tRNA ligase (852 aa).

Positions 1–42 (MGAFGWEQDRGAPFSGRSPRILTRMTDAPRPTAGADAPARPP) are disordered. Residues 1–635 (MGAFGWEQDR…ITLKDTWGKQ (635 aa)) form a glutaminyl-tRNA synthetase region. Positions 28–38 (APRPTAGADAP) are enriched in low complexity. A 'HIGH' region motif is present at residues 74–84 (PDPSGYAHLGH). L-glutamine is bound by residues D107 and Y252. The 'KMSKS' region motif lies at 308–312 (ITSKR). Disordered stretches follow at residues 533-562 (EGENADVEDDSAGPAEHEAEPGAGQETAPV) and 632-681 (WGKQ…LTPE). The gatB-like stretch occupies residues 636-852 (GGGTQQKAEG…LAAALKDALA (217 aa)). The span at 664–675 (SSSPAKAHAPKA) shows a compositional bias: low complexity.

This sequence in the N-terminal section; belongs to the class-I aminoacyl-tRNA synthetase family. The protein in the C-terminal section; belongs to the GatB/GatE family. As to quaternary structure, monomer.

The protein resides in the cytoplasm. The enzyme catalyses tRNA(Gln) + L-glutamine + ATP = L-glutaminyl-tRNA(Gln) + AMP + diphosphate. The protein is Glutamine--tRNA ligase of Deinococcus radiodurans (strain ATCC 13939 / DSM 20539 / JCM 16871 / CCUG 27074 / LMG 4051 / NBRC 15346 / NCIMB 9279 / VKM B-1422 / R1).